Reading from the N-terminus, the 116-residue chain is Propanediol dehydratase-reactivating factor small subunit (116 aa).

Residue glutamate 31 coordinates Mg(2+).

This sequence belongs to the DdrB/PduH family. In terms of assembly, forms a heterotetramer PduG(2)/PduH(2). Requires Mg(2+) as cofactor.

The protein localises to the bacterial microcompartment. The enzyme catalyses ATP + H2O = ADP + phosphate + H(+). Its pathway is polyol metabolism; 1,2-propanediol degradation. Its function is as follows. Small subunit of the propanediol dehydratase-reactivating factor (DDR), which reactivates suicidally inhibited adenosylcobalamin-dependent propanediol dehydratase (diol dehydratase, DDH) found in the bacterial microcompartment (BMC) dedicated to 1,2-propanediol (1,2-PD) degradation. Reactivates inactivated DDH in the presence of ATP, Mg(2+) and free adenosylcobalamin (AdoCbl), by mediating the exchange of the tightly bound damaged cofactor AdoCbl for a free intact one. The 1,2-PD-specific bacterial microcompartment (BMC) concentrates low levels of 1,2-PD catabolic enzymes, concentrates volatile reaction intermediates thus enhancing pathway flux and keeps the level of toxic, mutagenic propionaldehyde low. The chain is Propanediol dehydratase-reactivating factor small subunit from Salmonella typhimurium (strain LT2 / SGSC1412 / ATCC 700720).